The sequence spans 404 residues: MNLINKKNLNIYLCGPTVYSDVHIGNLRTIIIFDAIFECLKNKGFSINFLHNITDIDDKIIEKAQELGISEAELTEKYTNEYFKILEIFNIKKPTKIVKVTEKIEKIIEYIKLLEKKGFTYYNKNNDLVFDILKIPNYGIISGQKIESLLDKNTKKTKSKNDFVLWKKTQKGLFFKSFFGLGRPGWHTECAALIYDYFQKKSLDLHGGGVDLIFPHHENENAQHFALTGNPIAENWFRSGFVNLNGKKMAKSLNNVLLAKDFSHKYNPDIIRSIFLSINPTVPINLTEELIKNHKKLIEKYQKICFEWYFDKKNEKTEKVEQVLNLFIEGKFAKANFLIMELIKQKENSTIRKIFLNLRFNFTKMHLNPESQEKIKNWNKLIMDKNYSEADKIRKELWKIFKNS.

Residue C14 coordinates Zn(2+). The short motif at 16–26 is the 'HIGH' region element; it reads PTVYSDVHIGN. Positions 190, 216, and 220 each coordinate Zn(2+). Positions 248-252 match the 'KMSKS' region motif; that stretch reads KMAKS. Position 251 (K251) interacts with ATP.

This sequence belongs to the class-I aminoacyl-tRNA synthetase family. In terms of assembly, monomer. Requires Zn(2+) as cofactor.

Its subcellular location is the cytoplasm. It carries out the reaction tRNA(Cys) + L-cysteine + ATP = L-cysteinyl-tRNA(Cys) + AMP + diphosphate. In Mesomycoplasma hyopneumoniae (strain 232) (Mycoplasma hyopneumoniae), this protein is Cysteine--tRNA ligase.